The following is an 816-amino-acid chain: Protein hunchback (816 aa).

Disordered stretches follow at residues Leu33–Asp92, Gln129–Asn151, Tyr165–Val185, and Ala197–Asn229. Composition is skewed to low complexity over residues Ser49–Gln60, Gln79–Gln89, and Gln129–Gln139. At Thr199 the chain carries Phosphothreonine. A phosphoserine mark is found at Ser209, Ser228, Ser230, and Ser231. The segment covering Glu219–Asn229 has biased composition (basic and acidic residues). 4 consecutive C2H2-type zinc fingers follow at residues Tyr261–His283, Leu290–His312, Phe318–His340, and Tyr346–His364. Disordered regions lie at residues Val387–Gln427, Leu536–His612, and Gly679–Thr734. 2 stretches are compositionally biased toward low complexity: residues Ser399–Gln427 and Leu536–Gln560. Over residues Asn567–Asp578 the composition is skewed to acidic residues. Residues Ser584 and Ser587 each carry the phosphoserine modification. Positions Ser712–Thr734 are enriched in low complexity. C2H2-type zinc fingers lie at residues Tyr763 to His785 and Phe791 to His815.

The protein belongs to the hunchback C2H2-type zinc-finger protein family.

The protein resides in the nucleus. In terms of biological role, gap class segmentation protein that controls development of head structures. In Drosophila virilis (Fruit fly), this protein is Protein hunchback.